A 221-amino-acid chain; its full sequence is 7-cyano-7-deazaguanine synthase (221 aa).

ATP is bound at residue 10 to 20 (LSGGLDSTTCM). Positions 188, 196, 199, and 202 each coordinate Zn(2+).

It belongs to the QueC family. As to quaternary structure, homodimer. Zn(2+) is required as a cofactor.

The catalysed reaction is 7-carboxy-7-deazaguanine + NH4(+) + ATP = 7-cyano-7-deazaguanine + ADP + phosphate + H2O + H(+). The protein operates within purine metabolism; 7-cyano-7-deazaguanine biosynthesis. In terms of biological role, catalyzes the ATP-dependent conversion of 7-carboxy-7-deazaguanine (CDG) to 7-cyano-7-deazaguanine (preQ(0)). The sequence is that of 7-cyano-7-deazaguanine synthase from Oceanobacillus iheyensis (strain DSM 14371 / CIP 107618 / JCM 11309 / KCTC 3954 / HTE831).